The sequence spans 163 residues: MNSAGRVHRSRAGSRGHAAISPLTMASFSVARGIRSSNVYDDTDDELSILTFFSAVRRNRLTSSLPPILSARCSSACFSVRIVLPLSLTISISALMYSTNSALGRKLTGAFSIQTNIEQSCGFFRTSIMATLPPIECPIIIGPPLVFNSCFVIKCFTSSDMTS.

Residues 76–96 (ACFSVRIVLPLSLTISISALM) traverse the membrane as a helical segment.

Its subcellular location is the membrane. Involved in yeast cell wall biogenesis. The protein is Protein NAG1 (NAG1) of Saccharomyces cerevisiae (strain ATCC 204508 / S288c) (Baker's yeast).